The chain runs to 839 residues: Dynein axonemal assembly factor 5 (839 aa).

11 HEAT repeats span residues 10–48, 54–92, 94–137, 140–178, 181–219, 221–257, 259–297, 578–617, 675–713, 717–755, and 723–761; these read TSDV…DEKL, QHVF…HVPR, EEAL…VCGK, APYL…CIPE, HMQA…YSSG, SVDD…KLQD, YSFF…QWEK, GETL…KASE, LQVE…TCER, PDKL…CITD, and IYPE…ERTT.

This sequence belongs to the DNAAF5 family. As to quaternary structure, interacts with DNAI2; probably involved in outer arm dynein assembly.

It localises to the cytoplasm. It is found in the dynein axonemal particle. Its function is as follows. Cytoplasmic protein involved in the delivery of the dynein machinery to the motile cilium. It is required for the assembly of the axonemal dynein inner and outer arms, two structures attached to the peripheral outer doublet A microtubule of the axoneme, that play a crucial role in cilium motility. The protein is Dynein axonemal assembly factor 5 of Xenopus laevis (African clawed frog).